The primary structure comprises 360 residues: MSQERPTFYRQELNKTIWEVPERYQNLSPVGSGAYGSVCAAFDTKTGLRVAVKKLSRPFQSIIHAKRTYRELRLLKHMKHENVIGLLDVFTPARSLEEFNDVYLVTHLMGADLNNIVKCQKLTDDHVQFLIYQILRGLKYIHSADIIHRDLKPSNLAVNEDCELKILDFGLARHTDDEMTGYVATRWYRAPEIMLNWMHYNQTVDIWSVGCIMAELLTGRTLFPGTDHIDQLKLILRLVGTPGADLLKKISSESARNYIQSLTQMPKMNFANVFIGANPLAVDLLEKMLVLDSDKRITAAQALAHAYFAQYHDPDDEPVADPYDQSFESRDLLIDEWKSLTYDEVVSFVPPPLDQEEMES.

Residue Ser2 is modified to N-acetylserine. Ser2 carries the post-translational modification Phosphoserine. The residue at position 16 (Thr16) is a Phosphothreonine. One can recognise a Protein kinase domain in the interval 24-308; sequence YQNLSPVGSG…AAQALAHAYF (285 aa). ATP-binding positions include 30-38 and Lys53; that span reads VGSGAYGSV. Lys53 carries the post-translational modification N6-acetyllysine. Asp150 functions as the Proton acceptor in the catalytic mechanism. Lys152 carries the post-translational modification N6-acetyllysine. Residue Thr180 is modified to Phosphothreonine; by MAP2K3, MAP2K4, MAP2K6 and autocatalysis. The TXY signature appears at 180-182; it reads TGY. Tyr182 bears the Phosphotyrosine; by MAP2K3, MAP2K4, MAP2K6 and autocatalysis mark. Thr263 carries the post-translational modification Phosphothreonine. At Tyr323 the chain carries Phosphotyrosine; by ZAP70.

This sequence belongs to the protein kinase superfamily. CMGC Ser/Thr protein kinase family. MAP kinase subfamily. In terms of assembly, component of a signaling complex containing at least AKAP13, PKN1, MAPK14, ZAK and MAP2K3. Within this complex, AKAP13 interacts directly with PKN1, which in turn recruits MAPK14, MAP2K3 and ZAK. Binds to a kinase interaction motif within the protein tyrosine phosphatase, PTPRR. This interaction retains MAPK14 in the cytoplasm and prevents nuclear accumulation. Interacts with SPAG9 and GADD45A. Interacts with CDC25B, CDC25C, DUSP1, DUSP10, DUSP16, NP60, SUPT20H and TAB1. Interacts with casein kinase II subunits CSNK2A1 and CSNK2B. Interacts with PPM1D. Interacts with CDK5RAP3; recruits PPM1D to MAPK14 and may regulate its dephosphorylation. Interacts with DUSP2; this interaction does not lead to catalytic activation of DUSP2 and dephosphrylation of MAPK14. Mg(2+) is required as a cofactor. Dually phosphorylated on Thr-180 and Tyr-182 by the MAP2Ks MAP2K3/MKK3, MAP2K4/MKK4 and MAP2K6/MKK6 in response to inflammatory citokines, environmental stress or growth factors, which activates the enzyme. Dual phosphorylation can also be mediated by TAB1-mediated autophosphorylation. TCR engagement in T-cells also leads to Tyr-323 phosphorylation by ZAP70. Dephosphorylated and inactivated by DUPS1, DUSP10 and DUSP16. PPM1D also mediates dephosphorylation and inactivation of MAPK14. Post-translationally, acetylated at Lys-53 and Lys-152 by KAT2B and EP300. Acetylation at Lys-53 increases the affinity for ATP and enhances kinase activity. Lys-53 and Lys-152 are deacetylated by HDAC3. In terms of processing, ubiquitinated. Ubiquitination leads to degradation by the proteasome pathway.

The protein resides in the cytoplasm. It is found in the nucleus. The catalysed reaction is L-seryl-[protein] + ATP = O-phospho-L-seryl-[protein] + ADP + H(+). It catalyses the reaction L-threonyl-[protein] + ATP = O-phospho-L-threonyl-[protein] + ADP + H(+). Activated by cell stresses such as DNA damage, heat shock, osmotic shock, anisomycin and sodium arsenite, as well as pro-inflammatory stimuli such as bacterial lipopolysaccharide (LPS) and interleukin-1. Activation occurs through dual phosphorylation of Thr-180 and Tyr-182 by either of two dual specificity kinases, MAP2K3/MKK3 or MAP2K6/MKK6, and potentially also MAP2K4/MKK4, as well as by TAB1-mediated autophosphorylation. MAPK14 phosphorylated on both Thr-180 and Tyr-182 is 10-20-fold more active than MAPK14 phosphorylated only on Thr-180, whereas MAPK14 phosphorylated on Tyr-182 alone is inactive. whereas Thr-180 is necessary for catalysis, Tyr-182 may be required for auto-activation and substrate recognition. Phosphorylated at Tyr-323 by ZAP70 in an alternative activation pathway in response to TCR signaling in T-cells. This alternative pathway is inhibited by GADD45A. Inhibited by dual specificity phosphatases, such as DUSP1, DUSP10, and DUSP16. Specifically inhibited by the binding of pyridinyl-imidazole compounds, which are cytokine-suppressive anti-inflammatory drugs (CSAID). SB203580 is an inhibitor of MAPK14. In terms of biological role, serine/threonine kinase which acts as an essential component of the MAP kinase signal transduction pathway. MAPK14 is one of the four p38 MAPKs which play an important role in the cascades of cellular responses evoked by extracellular stimuli such as pro-inflammatory cytokines or physical stress leading to direct activation of transcription factors. Accordingly, p38 MAPKs phosphorylate a broad range of proteins and it has been estimated that they may have approximately 200 to 300 substrates each. Some of the targets are downstream kinases which are activated through phosphorylation and further phosphorylate additional targets. RPS6KA5/MSK1 and RPS6KA4/MSK2 can directly phosphorylate and activate transcription factors such as CREB1, ATF1, the NF-kappa-B isoform RELA/NFKB3, STAT1 and STAT3, but can also phosphorylate histone H3 and the nucleosomal protein HMGN1. RPS6KA5/MSK1 and RPS6KA4/MSK2 play important roles in the rapid induction of immediate-early genes in response to stress or mitogenic stimuli, either by inducing chromatin remodeling or by recruiting the transcription machinery. On the other hand, two other kinase targets, MAPKAPK2/MK2 and MAPKAPK3/MK3, participate in the control of gene expression mostly at the post-transcriptional level, by phosphorylating ZFP36 (tristetraprolin) and ELAVL1, and by regulating EEF2K, which is important for the elongation of mRNA during translation. MKNK1/MNK1 and MKNK2/MNK2, two other kinases activated by p38 MAPKs, regulate protein synthesis by phosphorylating the initiation factor EIF4E2. MAPK14 also interacts with casein kinase II, leading to its activation through autophosphorylation and further phosphorylation of TP53/p53. In the cytoplasm, the p38 MAPK pathway is an important regulator of protein turnover. For example, CFLAR is an inhibitor of TNF-induced apoptosis whose proteasome-mediated degradation is regulated by p38 MAPK phosphorylation. In a similar way, MAPK14 phosphorylates the ubiquitin ligase SIAH2, regulating its activity towards EGLN3. MAPK14 may also inhibit the lysosomal degradation pathway of autophagy by interfering with the intracellular trafficking of the transmembrane protein ATG9. Another function of MAPK14 is to regulate the endocytosis of membrane receptors by different mechanisms that impinge on the small GTPase RAB5A. In addition, clathrin-mediated EGFR internalization induced by inflammatory cytokines and UV irradiation depends on MAPK14-mediated phosphorylation of EGFR itself as well as of RAB5A effectors. Ectodomain shedding of transmembrane proteins is regulated by p38 MAPKs as well. In response to inflammatory stimuli, p38 MAPKs phosphorylate the membrane-associated metalloprotease ADAM17. Such phosphorylation is required for ADAM17-mediated ectodomain shedding of TGF-alpha family ligands, which results in the activation of EGFR signaling and cell proliferation. Another p38 MAPK substrate is FGFR1. FGFR1 can be translocated from the extracellular space into the cytosol and nucleus of target cells, and regulates processes such as rRNA synthesis and cell growth. FGFR1 translocation requires p38 MAPK activation. In the nucleus, many transcription factors are phosphorylated and activated by p38 MAPKs in response to different stimuli. Classical examples include ATF1, ATF2, ATF6, ELK1, PTPRH, DDIT3, TP53/p53 and MEF2C and MEF2A. The p38 MAPKs are emerging as important modulators of gene expression by regulating chromatin modifiers and remodelers. The promoters of several genes involved in the inflammatory response, such as IL6, IL8 and IL12B, display a p38 MAPK-dependent enrichment of histone H3 phosphorylation on 'Ser-10' (H3S10ph) in LPS-stimulated myeloid cells. This phosphorylation enhances the accessibility of the cryptic NF-kappa-B-binding sites marking promoters for increased NF-kappa-B recruitment. Phosphorylates CDC25B and CDC25C which is required for binding to 14-3-3 proteins and leads to initiation of a G2 delay after ultraviolet radiation. Phosphorylates TIAR following DNA damage, releasing TIAR from GADD45A mRNA and preventing mRNA degradation. The p38 MAPKs may also have kinase-independent roles, which are thought to be due to the binding to targets in the absence of phosphorylation. Protein O-Glc-N-acylation catalyzed by the OGT is regulated by MAPK14, and, although OGT does not seem to be phosphorylated by MAPK14, their interaction increases upon MAPK14 activation induced by glucose deprivation. This interaction may regulate OGT activity by recruiting it to specific targets such as neurofilament H, stimulating its O-Glc-N-acylation. Required in mid-fetal development for the growth of embryo-derived blood vessels in the labyrinth layer of the placenta. Also plays an essential role in developmental and stress-induced erythropoiesis, through regulation of EPO gene expression. Phosphorylates S100A9 at 'Thr-113'. In Canis lupus familiaris (Dog), this protein is Mitogen-activated protein kinase 14.